A 368-amino-acid polypeptide reads, in one-letter code: Glutaminyl-peptide cyclotransferase (368 aa).

Residues 1–23 (MAGERRDSKAAAFFCLAWALCLA) form the signal peptide. A glycan (N-linked (GlcNAc...) asparagine) is linked at asparagine 53. A disulfide bridge links cysteine 143 with cysteine 169. A Zn(2+)-binding site is contributed by aspartate 164. Glutamate 207 (proton acceptor) is an active-site residue. Glutamate 208 is a binding site for Zn(2+). The Proton acceptor role is filled by aspartate 254. Asparagine 292 is a glycosylation site (N-linked (GlcNAc...) asparagine). Residue histidine 336 participates in Zn(2+) binding. N-linked (GlcNAc...) asparagine glycosylation is present at asparagine 352.

Belongs to the glutaminyl-peptide cyclotransferase family. Expressed by the venom gland.

The protein resides in the secreted. It catalyses the reaction N-terminal L-glutaminyl-[peptide] = N-terminal 5-oxo-L-prolyl-[peptide] + NH4(+). Functionally, responsible for the biosynthesis of pyroglutamyl peptides. Has a bias against acidic and tryptophan residues adjacent to the N-terminal glutaminyl residue and a lack of importance of chain length after the second residue. Also catalyzes N-terminal pyroglutamate formation. This Boiga dendrophila (Mangrove snake) protein is Glutaminyl-peptide cyclotransferase (QPCT).